Here is a 234-residue protein sequence, read N- to C-terminus: Accessory gland protein Acp29AB (234 aa).

A signal peptide spans 1–21; it reads MYATNLLYLLALWNLWLVSGG. N-linked (GlcNAc...) asparagine glycosylation is found at Asn29, Asn61, Asn127, and Asn164. A C-type lectin domain is found at 137-234; that stretch reads VTCREMNGHL…SFVCQANQWA (98 aa). Cystine bridges form between Cys139-Cys228 and Cys207-Cys220.

The protein localises to the secreted. In terms of biological role, responsible for physiological and behavioral changes in mated female flies. The sequence is that of Accessory gland protein Acp29AB (Acp29AB) from Drosophila simulans (Fruit fly).